The sequence spans 147 residues: Hemoglobin subunit beta (147 aa).

V2 is subject to N-acetylvaline. One can recognise a Globin domain in the interval 3–147 (HLTGEEKAAV…VANALAHKYH (145 aa)). A Phosphothreonine modification is found at T13. A Phosphoserine modification is found at S45. K60 is modified (N6-acetyllysine). H64 lines the heme b pocket. K83 is subject to N6-acetyllysine. H93 contributes to the heme b binding site. C94 is subject to S-nitrosocysteine. K145 carries the post-translational modification N6-acetyllysine.

Belongs to the globin family. As to quaternary structure, heterotetramer of two alpha chains and two beta chains. In terms of tissue distribution, red blood cells.

Its function is as follows. Involved in oxygen transport from the lung to the various peripheral tissues. This Ateles belzebuth (White-bellied spider monkey) protein is Hemoglobin subunit beta (HBB).